Consider the following 228-residue polypeptide: Ribosomal RNA small subunit methyltransferase G (228 aa).

Residues glycine 70, 121–122 (AE), and arginine 138 each bind S-adenosyl-L-methionine.

This sequence belongs to the methyltransferase superfamily. RNA methyltransferase RsmG family.

Its subcellular location is the cytoplasm. Specifically methylates the N7 position of a guanine in 16S rRNA. The chain is Ribosomal RNA small subunit methyltransferase G from Thermotoga sp. (strain RQ2).